A 79-amino-acid chain; its full sequence is Sulfur carrier protein TusA (79 aa).

Catalysis depends on Cys-17, which acts as the Cysteine persulfide intermediate.

This sequence belongs to the sulfur carrier protein TusA family.

Its subcellular location is the cytoplasm. Its function is as follows. Sulfur carrier protein which probably makes part of a sulfur-relay system. This Actinobacillus succinogenes (strain ATCC 55618 / DSM 22257 / CCUG 43843 / 130Z) protein is Sulfur carrier protein TusA.